A 249-amino-acid chain; its full sequence is 5'-nucleotidase SurE (249 aa).

Positions 9, 10, 40, and 92 each coordinate a divalent metal cation.

Belongs to the SurE nucleotidase family. Requires a divalent metal cation as cofactor.

The protein localises to the cytoplasm. The enzyme catalyses a ribonucleoside 5'-phosphate + H2O = a ribonucleoside + phosphate. In terms of biological role, nucleotidase that shows phosphatase activity on nucleoside 5'-monophosphates. The chain is 5'-nucleotidase SurE from Shewanella baltica (strain OS223).